The chain runs to 466 residues: Soluble pyridine nucleotide transhydrogenase (466 aa).

Residue 36-45 (ERYHNVGGGC) coordinates FAD.

This sequence belongs to the class-I pyridine nucleotide-disulfide oxidoreductase family. It depends on FAD as a cofactor.

Its subcellular location is the cytoplasm. It catalyses the reaction NAD(+) + NADPH = NADH + NADP(+). Conversion of NADPH, generated by peripheral catabolic pathways, to NADH, which can enter the respiratory chain for energy generation. This chain is Soluble pyridine nucleotide transhydrogenase, found in Klebsiella pneumoniae subsp. pneumoniae (strain ATCC 700721 / MGH 78578).